We begin with the raw amino-acid sequence, 132 residues long: Small ribosomal subunit protein uS9 (132 aa).

Belongs to the universal ribosomal protein uS9 family.

The protein is Small ribosomal subunit protein uS9 (rps9) of Halobacterium salinarum (strain ATCC 700922 / JCM 11081 / NRC-1) (Halobacterium halobium).